A 487-amino-acid polypeptide reads, in one-letter code: UDP-N-acetylmuramate--L-alanine ligase (487 aa).

129 to 135 (GTHGKTT) contributes to the ATP binding site.

It belongs to the MurCDEF family.

It is found in the cytoplasm. The catalysed reaction is UDP-N-acetyl-alpha-D-muramate + L-alanine + ATP = UDP-N-acetyl-alpha-D-muramoyl-L-alanine + ADP + phosphate + H(+). It participates in cell wall biogenesis; peptidoglycan biosynthesis. Functionally, cell wall formation. The polypeptide is UDP-N-acetylmuramate--L-alanine ligase (Aliivibrio fischeri (strain ATCC 700601 / ES114) (Vibrio fischeri)).